Reading from the N-terminus, the 504-residue chain is Anaerobic nitric oxide reductase transcription regulator NorR (504 aa).

Asp-57 is subject to 4-aspartylphosphate. The Sigma-54 factor interaction domain maps to 187–416 (MIGLSPGMTQ…LEHAIHRAVV (230 aa)). ATP is bound by residues 215–222 (GETGTGKE) and 278–287 (ADNGTLFLDE). Residues 479–498 (WAACARMLETDVANLHRLAK) constitute a DNA-binding region (H-T-H motif).

The protein operates within nitrogen metabolism; nitric oxide reduction. Required for the expression of anaerobic nitric oxide (NO) reductase, acts as a transcriptional activator for at least the norVW operon. Activation also requires sigma-54. The polypeptide is Anaerobic nitric oxide reductase transcription regulator NorR (Escherichia coli O127:H6 (strain E2348/69 / EPEC)).